The sequence spans 627 residues: Glucokinase regulatory protein (627 aa).

2 consecutive SIS domains span residues 90–286 (VQEV…QGVV) and 320–499 (VGIS…LLGK). Beta-D-fructose 1-phosphate is bound by residues 109-110 (TS), E153, and 179-181 (SVG). 109–110 (TS) lines the beta-D-fructose 6-phosphate pocket. 179 to 181 (SVG) is a beta-D-fructose 6-phosphate binding site. The interval 199–200 (AV) is important for interaction with GCK. E348 contacts beta-D-fructose 1-phosphate. The tract at residues 463–465 (LLF) is essential for interaction with GCK. Residue K514 coordinates beta-D-fructose 1-phosphate. A beta-D-fructose 6-phosphate-binding site is contributed by K514.

The protein belongs to the GCKR family. As to quaternary structure, interacts (fructose 6-phosphate bound form) with GCK. As to expression, detected in liver (at protein level). Not detected in muscle, brain, heart, testis, intestine or spleen.

The protein localises to the cytoplasm. The protein resides in the nucleus. It is found in the mitochondrion. In terms of biological role, regulates glucokinase (GCK) by forming an inactive complex with this enzyme. Acts by promoting GCK recruitment to the nucleus, possibly to provide a reserve of GCK that can be quickly released in the cytoplasm after a meal. The affinity of GCKR for GCK is modulated by fructose metabolites: GCKR with bound fructose 6-phosphate has increased affinity for GCK, while GCKR with bound fructose 1-phosphate has strongly decreased affinity for GCK and does not inhibit GCK activity. This Rattus norvegicus (Rat) protein is Glucokinase regulatory protein.